We begin with the raw amino-acid sequence, 306 residues long: 3-methyl-2-oxobutanoate hydroxymethyltransferase (306 aa).

Residues Asp-53 and Asp-96 each coordinate Mg(2+). 3-methyl-2-oxobutanoate-binding positions include 53–54 (DS), Asp-96, and Lys-126. Glu-128 is a Mg(2+) binding site. The active-site Proton acceptor is Glu-195.

Belongs to the PanB family. In terms of assembly, homodecamer; pentamer of dimers. It depends on Mg(2+) as a cofactor.

It localises to the cytoplasm. The catalysed reaction is 3-methyl-2-oxobutanoate + (6R)-5,10-methylene-5,6,7,8-tetrahydrofolate + H2O = 2-dehydropantoate + (6S)-5,6,7,8-tetrahydrofolate. It participates in cofactor biosynthesis; (R)-pantothenate biosynthesis; (R)-pantoate from 3-methyl-2-oxobutanoate: step 1/2. In terms of biological role, catalyzes the reversible reaction in which hydroxymethyl group from 5,10-methylenetetrahydrofolate is transferred onto alpha-ketoisovalerate to form ketopantoate. In Anaeromyxobacter dehalogenans (strain 2CP-1 / ATCC BAA-258), this protein is 3-methyl-2-oxobutanoate hydroxymethyltransferase.